The sequence spans 149 residues: Pleckstrin homology domain-containing family J member 1 (149 aa).

A PH domain is found at 15–108; it reads PAEMAAELGM…WMAALRQASY (94 aa).

In Bos taurus (Bovine), this protein is Pleckstrin homology domain-containing family J member 1 (PLEKHJ1).